The sequence spans 191 residues: Threonylcarbamoyl-AMP synthase (191 aa).

Positions 7-191 (QSELNDALKI…FHASTGKRLR (185 aa)) constitute a YrdC-like domain.

This sequence belongs to the SUA5 family. TsaC subfamily.

Its subcellular location is the cytoplasm. It carries out the reaction L-threonine + hydrogencarbonate + ATP = L-threonylcarbamoyladenylate + diphosphate + H2O. Its function is as follows. Required for the formation of a threonylcarbamoyl group on adenosine at position 37 (t(6)A37) in tRNAs that read codons beginning with adenine. Catalyzes the conversion of L-threonine, HCO(3)(-)/CO(2) and ATP to give threonylcarbamoyl-AMP (TC-AMP) as the acyladenylate intermediate, with the release of diphosphate. The polypeptide is Threonylcarbamoyl-AMP synthase (Psychromonas ingrahamii (strain DSM 17664 / CCUG 51855 / 37)).